We begin with the raw amino-acid sequence, 598 residues long: Trichothecene efflux pump TRI12 (598 aa).

A helical membrane pass occupies residues 42-62 (IVASFAAFSMNVVATYFVLQA). N79 is a glycosylation site (N-linked (GlcNAc...) asparagine). 2 helical membrane-spanning segments follow: residues 109-129 (PFVI…CTAT) and 135-155 (LAAM…PLFI). N-linked (GlcNAc...) asparagine glycosylation is present at N161. 10 consecutive transmembrane segments (helical) span residues 165 to 185 (FLGL…SPYL), 197 to 217 (WIFY…IIWY), 241 to 261 (WIGI…VSWG), 273 to 293 (VIGL…YEVY), 312 to 332 (FVCI…LVIM), 356 to 376 (ATAS…FHLV), 381 to 401 (WQIL…SSIN), 409 to 429 (IALS…TMLL), 442 to 462 (AFAV…AAFI), and 533 to 553 (ANVY…SLCM). A disordered region spans residues 579 to 598 (LEGNSESQPSPIILSMADKE).

The protein belongs to the major facilitator superfamily.

It is found in the cell membrane. Efflux pump that provides the dual role of trichothecene export and self-protection by allowing the fungus to evade the harmful effect of its own trichothecene production. This is Trichothecene efflux pump TRI12 from Fusarium sporotrichioides.